The sequence spans 115 residues: Aspartate 1-decarboxylase (115 aa).

The active-site Schiff-base intermediate with substrate; via pyruvic acid is S25. S25 is subject to Pyruvic acid (Ser). Residue T57 coordinates substrate. The Proton donor role is filled by Y58. 73–75 (GAA) serves as a coordination point for substrate.

It belongs to the PanD family. Heterooctamer of four alpha and four beta subunits. Pyruvate is required as a cofactor. Is synthesized initially as an inactive proenzyme, which is activated by self-cleavage at a specific serine bond to produce a beta-subunit with a hydroxyl group at its C-terminus and an alpha-subunit with a pyruvoyl group at its N-terminus.

It is found in the cytoplasm. It catalyses the reaction L-aspartate + H(+) = beta-alanine + CO2. It participates in cofactor biosynthesis; (R)-pantothenate biosynthesis; beta-alanine from L-aspartate: step 1/1. Its function is as follows. Catalyzes the pyruvoyl-dependent decarboxylation of aspartate to produce beta-alanine. In Kosmotoga olearia (strain ATCC BAA-1733 / DSM 21960 / TBF 19.5.1), this protein is Aspartate 1-decarboxylase.